We begin with the raw amino-acid sequence, 208 residues long: Methionine-R-sulfoxide reductase B1 (208 aa).

Residues 27-36 (QDSDNPDKRY) show a composition bias toward basic and acidic residues. Residues 27–48 (QDSDNPDKRYSGPAATMDNKSE) are disordered. In terms of domain architecture, MsrB spans 54–188 (KEELRKRLTP…NSASIEFVNA (135 aa)). Zn(2+)-binding residues include Cys-93, Cys-96, Cys-154, and Cys-157. Cysteines 111 and 177 form a disulfide. The active-site Nucleophile is Cys-177. Residues 189–208 (DPATSSPPVATPTAAPIAQQ) form a disordered region.

Belongs to the MsrB Met sulfoxide reductase family. Requires Zn(2+) as cofactor. In terms of tissue distribution, present in the embryonic nervous system (brain and cord) in neuronal cell bodies, along axons. Also present in embryonic muscles in motor axons. Localizes to growing bristle tips where it is distributed in small puntae. Present at and at sites of actin localization.

The protein resides in the cytoplasm. The protein localises to the nucleus. It localises to the cytoskeleton. The enzyme catalyses L-methionyl-[protein] + [thioredoxin]-disulfide + H2O = L-methionyl-(R)-S-oxide-[protein] + [thioredoxin]-dithiol. Its function is as follows. Methionine-sulfoxide reductase that specifically reduces methionine (R)-sulfoxide back to methionine. While in many cases methionine oxidation is the result of random oxidation following oxidative stress, methionine oxidation is also a post-translational modification that takes place on specific residues. Acts as a regulator of actin assembly by reducing methionine (R)-sulfoxide mediated by Mical on actin thereby promoting filament repolymerization. The polypeptide is Methionine-R-sulfoxide reductase B1 (SelR) (Drosophila melanogaster (Fruit fly)).